Here is a 196-residue protein sequence, read N- to C-terminus: Protease (196 aa).

Active-site residues include His-54, Asp-70, and Cys-121.

The protein belongs to the peptidase C5 family. In terms of assembly, interacts with protease cofactor pVI-C; this interaction is necessary for protease activation.

The protein localises to the virion. The protein resides in the host nucleus. The enzyme catalyses Cleaves proteins of the adenovirus and its host cell at two consensus sites: -Yaa-Xaa-Gly-Gly-|-Xaa- and -Yaa-Xaa-Gly-Xaa-|-Gly- (in which Yaa is Met, Ile or Leu, and Xaa is any amino acid).. With respect to regulation, requires DNA and protease cofactor for maximal activation. Inside nascent virions, becomes partially activated by binding to the viral DNA, allowing it to cleave the cofactor that binds to the protease and fully activates it. Actin, like the viral protease cofactor, seems to act as a cofactor in the cleavage of cytokeratin 18 and of actin itself. Cleaves viral precursor proteins (pTP, pIIIa, pVI, pVII, pVIII, and pX) inside newly assembled particles giving rise to mature virions. Protease complexed to its cofactor slides along the viral DNA to specifically locate and cleave the viral precursors. Mature virions have a weakened organization compared to the unmature virions, thereby facilitating subsequent uncoating. Without maturation, the particle lacks infectivity and is unable to uncoat. Late in adenovirus infection, in the cytoplasm, may participate in the cytoskeleton destruction. Cleaves host cell cytoskeletal keratins K7 and K18. In Bos taurus (Bovine), this protein is Protease.